A 177-amino-acid polypeptide reads, in one-letter code: Large ribosomal subunit protein uL6 (177 aa).

The protein belongs to the universal ribosomal protein uL6 family. Part of the 50S ribosomal subunit.

Its function is as follows. This protein binds to the 23S rRNA, and is important in its secondary structure. It is located near the subunit interface in the base of the L7/L12 stalk, and near the tRNA binding site of the peptidyltransferase center. The polypeptide is Large ribosomal subunit protein uL6 (Cronobacter sakazakii (strain ATCC BAA-894) (Enterobacter sakazakii)).